Consider the following 281-residue polypeptide: Ribosomal protein L11 methyltransferase (281 aa).

S-adenosyl-L-methionine-binding residues include Thr133, Gly154, Asp175, and Asn216.

It belongs to the methyltransferase superfamily. PrmA family.

The protein resides in the cytoplasm. The enzyme catalyses L-lysyl-[protein] + 3 S-adenosyl-L-methionine = N(6),N(6),N(6)-trimethyl-L-lysyl-[protein] + 3 S-adenosyl-L-homocysteine + 3 H(+). Its function is as follows. Methylates ribosomal protein L11. The sequence is that of Ribosomal protein L11 methyltransferase from Campylobacter jejuni subsp. jejuni serotype O:6 (strain 81116 / NCTC 11828).